We begin with the raw amino-acid sequence, 173 residues long: Photosystem I assembly protein Ycf3 (173 aa).

TPR repeat units lie at residues 35–68 (AFAYYRDGMSAQSEGAYAEALENYYEALRLEEDP), 72–105 (SYTFYNIALIHTSNGDQTKALEYYRQALDLNPKM), and 120–153 (GEQAAEQGDMEMAEALFDQAAFYWKQAIRLAPDN).

Belongs to the Ycf3 family.

It is found in the plastid. It localises to the cyanelle thylakoid membrane. Functionally, essential for the assembly of the photosystem I (PSI) complex. May act as a chaperone-like factor to guide the assembly of the PSI subunits. This is Photosystem I assembly protein Ycf3 from Cyanophora paradoxa.